The primary structure comprises 257 residues: Deoxyribose-phosphate aldolase (257 aa).

The active-site Proton donor/acceptor is D102. K165 (schiff-base intermediate with acetaldehyde) is an active-site residue. The active-site Proton donor/acceptor is K199.

Belongs to the DeoC/FbaB aldolase family. DeoC type 2 subfamily.

The protein localises to the cytoplasm. The catalysed reaction is 2-deoxy-D-ribose 5-phosphate = D-glyceraldehyde 3-phosphate + acetaldehyde. It participates in carbohydrate degradation; 2-deoxy-D-ribose 1-phosphate degradation; D-glyceraldehyde 3-phosphate and acetaldehyde from 2-deoxy-alpha-D-ribose 1-phosphate: step 2/2. Catalyzes a reversible aldol reaction between acetaldehyde and D-glyceraldehyde 3-phosphate to generate 2-deoxy-D-ribose 5-phosphate. This chain is Deoxyribose-phosphate aldolase, found in Photobacterium profundum (strain SS9).